The primary structure comprises 223 residues: MGPFLPAICVVLLALNAAVSPASVGPEDYPAADEAERTANNDIIFDDYRGKGCVDDSGFVYKLGERFFPGHSNCPCVCTEDGPVCDQPECPKIHPKCTKVEHNGCCPECKEVKNFCEYRGKTYKILEEFKPSPCEWCRCEPNNEVHCVVADCAVPECVNPVYEPEQCCPICKNGPNCFAGTTIIPAGIEVKVDDCTICRCHSGDWWKPAQCLRRECLNGQATS.

Residues 1-21 (MGPFLPAICVVLLALNAAVSP) form the signal peptide. VWFC domains lie at 51-110 (KGCV…PECK) and 114-172 (NFCE…PICK).

Its subcellular location is the secreted. The protein localises to the synapse. In terms of biological role, may play a role in bone differentiation and matrix mineralization. May play a role in neural development. This Danio rerio (Zebrafish) protein is von Willebrand factor C domain-containing protein 2-like (vwc2l).